Here is a 260-residue protein sequence, read N- to C-terminus: NAD-capped RNA hydrolase NudC (260 aa).

K25 and R69 together coordinate substrate. Residues C98 and C101 each contribute to the Zn(2+) site. E111 serves as a coordination point for substrate. Zn(2+) is bound by residues C116 and C119. Position 124 (Y124) interacts with substrate. Residues 125-248 (PQIAPCVIVA…TVARRLIEDT (124 aa)) enclose the Nudix hydrolase domain. Residues A158, E174, and E178 each contribute to the a divalent metal cation site. Positions 159-180 (GFVEVGETLEQAVSREVLEESN) match the Nudix box motif. Substrate is bound at residue 192 to 199 (QPWPFPHS). E219 contributes to the a divalent metal cation binding site. A241 is a substrate binding site.

Belongs to the Nudix hydrolase family. NudC subfamily. Homodimer. The cofactor is Mg(2+). Mn(2+) serves as cofactor. Zn(2+) is required as a cofactor.

It catalyses the reaction a 5'-end NAD(+)-phospho-ribonucleoside in mRNA + H2O = a 5'-end phospho-adenosine-phospho-ribonucleoside in mRNA + beta-nicotinamide D-ribonucleotide + 2 H(+). The enzyme catalyses NAD(+) + H2O = beta-nicotinamide D-ribonucleotide + AMP + 2 H(+). The catalysed reaction is NADH + H2O = reduced beta-nicotinamide D-ribonucleotide + AMP + 2 H(+). In terms of biological role, mRNA decapping enzyme that specifically removes the nicotinamide adenine dinucleotide (NAD) cap from a subset of mRNAs by hydrolyzing the diphosphate linkage to produce nicotinamide mononucleotide (NMN) and 5' monophosphate mRNA. The NAD-cap is present at the 5'-end of some mRNAs and stabilizes RNA against 5'-processing. Has preference for mRNAs with a 5'-end purine. Catalyzes the hydrolysis of a broad range of dinucleotide pyrophosphates. The protein is NAD-capped RNA hydrolase NudC of Yersinia pseudotuberculosis serotype O:1b (strain IP 31758).